The following is a 775-amino-acid chain: Kojibiose phosphorylase (775 aa).

361 to 362 (WD) contacts substrate. E501 functions as the Proton donor in the catalytic mechanism. Residue 614–615 (KQ) participates in substrate binding.

The protein belongs to the glycosyl hydrolase 65 family. Homohexamer.

It carries out the reaction kojibiose + phosphate = beta-D-glucose 1-phosphate + D-glucose. With respect to regulation, inhibited by Hg(2+) and Pb(2+). Catalyzes the reversible phosphorolysis of kojibiose into beta-D-glucose 1-phosphate (Glc1P) and D-glucose. Can act with alpha-1,2-oligoglucans, such as selaginose, but more slowly. Inactive when disaccharides with linkages other than alpha-1,2 linkages, such as sophorose, trehalose, neotrehalose, nigerose, laminaribiose, maltose, cellobiose, isomaltose, gentiobiose, sucrose and lactose, are used as substrates. In contrast, shows broad specificity for the reverse reaction. Various monosaccharides and disaccharides having a glucosyl residue at the non-reducing end are effective acceptors. The sequence is that of Kojibiose phosphorylase from Thermoanaerobacter brockii (Thermoanaerobium brockii).